Here is a 165-residue protein sequence, read N- to C-terminus: Sporulation-specific cell division protein SsgB (165 aa).

The interval 1–21 (MLVGNSWTRSLEPVSGHEHTE) is disordered.

Belongs to the SsgA family. As to quaternary structure, interacts with SsgA. Interacts with FtsZ (via N-terminus).

The protein localises to the cell septum. Functionally, involved in sporulation-specific cell division. Required for early stages of sporulation. Important in the process of growth cessation prior to sporulation-specific cell division. Recruits cell division protein FtsZ to the future septum sites and tethers the contractile ring structure (Z ring) to the cytoplasmic membrane during sporulation. Stimulates polymerization and filament length of FtsZ in vitro. The protein is Sporulation-specific cell division protein SsgB of Kineococcus radiotolerans (strain ATCC BAA-149 / DSM 14245 / SRS30216).